Here is a 288-residue protein sequence, read N- to C-terminus: Bifunctional protein FolD 2 (288 aa).

NADP(+) is bound by residues 166 to 168 (GRS) and S191.

It belongs to the tetrahydrofolate dehydrogenase/cyclohydrolase family. In terms of assembly, homodimer.

It catalyses the reaction (6R)-5,10-methylene-5,6,7,8-tetrahydrofolate + NADP(+) = (6R)-5,10-methenyltetrahydrofolate + NADPH. The enzyme catalyses (6R)-5,10-methenyltetrahydrofolate + H2O = (6R)-10-formyltetrahydrofolate + H(+). It participates in one-carbon metabolism; tetrahydrofolate interconversion. Catalyzes the oxidation of 5,10-methylenetetrahydrofolate to 5,10-methenyltetrahydrofolate and then the hydrolysis of 5,10-methenyltetrahydrofolate to 10-formyltetrahydrofolate. In Frankia alni (strain DSM 45986 / CECT 9034 / ACN14a), this protein is Bifunctional protein FolD 2.